The following is a 221-amino-acid chain: Oxaloacetate tautomerase FAHD1, mitochondrial (221 aa).

Residues 1 to 24 constitute a mitochondrion transit peptide; sequence MAASRPLSRFWEWGKNIVCVGRNY. Position 37 is a phosphoserine (S37). 3 residues coordinate Mg(2+): E68, E70, and D99. K110 carries the post-translational modification N6-acetyllysine. K112 is subject to N6-succinyllysine.

The protein belongs to the FAH family. Homodimer. Mg(2+) is required as a cofactor. It depends on Mn(2+) as a cofactor.

The protein localises to the mitochondrion. The protein resides in the cytoplasm. It localises to the cytosol. The enzyme catalyses oxaloacetate = enol-oxaloacetate. The catalysed reaction is oxaloacetate + H(+) = pyruvate + CO2. It carries out the reaction a 3-acylpyruvate + H2O = a carboxylate + pyruvate + H(+). It catalyses the reaction acetylpyruvate + H2O = acetate + pyruvate + H(+). The enzyme catalyses 3-fumarylpyruvate + H2O = fumarate + pyruvate + H(+). Its activity is regulated as follows. Oxaloacetate decarboxylation is competitively inhibited by oxalate. Functionally, tautomerase that converts enol-oxaloacetate, a strong inhibitor of succinate dehydrogenase, to the physiological keto form of oxaloacetate. It is thereby required to maximize aerobic respiration efficiency by preventing succinate dehydrogenase inhibition. Also acts as a weak oxaloacetate decarboxylase (ODx), catalyzing the decarboxylation of oxaloacetate (OAA) to pyruvate and CO(2), and as such is likely a regulatory enzyme in the TCA cycle. Also displays acylpyruvase activity, being able to hydrolyze acetylpyruvate and fumarylpyruvate in vitro. The polypeptide is Oxaloacetate tautomerase FAHD1, mitochondrial (Bos taurus (Bovine)).